The following is a 343-amino-acid chain: UDP-3-O-acylglucosamine N-acyltransferase (343 aa).

The active-site Proton acceptor is H248.

This sequence belongs to the transferase hexapeptide repeat family. LpxD subfamily. As to quaternary structure, homotrimer.

It carries out the reaction a UDP-3-O-[(3R)-3-hydroxyacyl]-alpha-D-glucosamine + a (3R)-hydroxyacyl-[ACP] = a UDP-2-N,3-O-bis[(3R)-3-hydroxyacyl]-alpha-D-glucosamine + holo-[ACP] + H(+). The protein operates within bacterial outer membrane biogenesis; LPS lipid A biosynthesis. In terms of biological role, catalyzes the N-acylation of UDP-3-O-acylglucosamine using 3-hydroxyacyl-ACP as the acyl donor. Is involved in the biosynthesis of lipid A, a phosphorylated glycolipid that anchors the lipopolysaccharide to the outer membrane of the cell. The polypeptide is UDP-3-O-acylglucosamine N-acyltransferase (Microcystis aeruginosa (strain NIES-843 / IAM M-2473)).